A 293-amino-acid chain; its full sequence is 33 kDa chaperonin (293 aa).

2 disulfides stabilise this stretch: Cys-237–Cys-239 and Cys-271–Cys-274.

The protein belongs to the HSP33 family. Under oxidizing conditions two disulfide bonds are formed involving the reactive cysteines. Under reducing conditions zinc is bound to the reactive cysteines and the protein is inactive.

Its subcellular location is the cytoplasm. Redox regulated molecular chaperone. Protects both thermally unfolding and oxidatively damaged proteins from irreversible aggregation. Plays an important role in the bacterial defense system toward oxidative stress. The chain is 33 kDa chaperonin from Haemophilus influenzae (strain ATCC 51907 / DSM 11121 / KW20 / Rd).